A 603-amino-acid chain; its full sequence is MENQAHNTMGTSPCEAELQELMEQIDIMVSNKKMDWERKMRALETRLDLRDQELANAQTCLDQKGQEVGLLRQKLDSLEKCNLAMTQNYEGQLQSLKAQFSKLTNSFEKLRLHQMKQNKVPRKELPHLKEELPFELSNLNQKLEEFRAKSREWDKQEILYQTHLISLDAQQKLLSEKCNQFQKQAQSYQTQLNGKKQCLEDSSSEIPRLICDPDPNCEIGERDEFIIEKLKSAVSEIALSRNKLQDENQKLLQELKMYQRQCQAMEAGLSEVKSELQSRDDLLRIIEMERLQLHRELLKIGECQNAQGNKKRLESSHLPSIKEPERKRKELFSVMQDQPNHEKELNKIRSQLQQEEEYHNSEQERMRNEISDLTEELHQKEITIATVTKKAALLEKQLKMELEIKEKMLAKEQVSDMKYKAVRTENTHLKGMMGDLDPGRYMSMDFTNREHSRHTSINKLEYENERLRNDLAKLRVNGKSTRTNQNTYEETGRYAYQSQIKVEKNEERLSHDCEPNRSTSPLPPLTFQTKEMTSPLVSDDDVFPLSPPDMSFPASLAAQHFLLEEEKRAKELEKLLNTHIDELQRHTEFTLNKYSKLKQNRHI.

Coiled coils occupy residues 14-59 (CEAE…NAQT), 85-197 (MTQN…GKKQ), 227-278 (IEKL…ELQS), 336-399 (QDQP…KQLK), and 454-480 (HTSI…NGKS). S546 is modified (phosphoserine). A coiled-coil region spans residues 557–600 (AAQHFLLEEEKRAKELEKLLNTHIDELQRHTEFTLNKYSKLKQN).

It belongs to the CEP63 family. As to quaternary structure, interacts with CEP152; the interaction is mutually exclusive with CEP63.

The protein resides in the cytoplasm. Functionally, key structural component of the deuterosome, a structure that promotes de novo centriole amplification in multiciliated cells. Deuterosome-mediated centriole amplification occurs in terminally differentiated multiciliated cells and can generate more than 100 centrioles. Probably sufficient for the specification and formation of the deuterosome inner core. Interacts with CEP152 and recruits PLK4 to activate centriole biogenesis. This Macaca fascicularis (Crab-eating macaque) protein is Deuterosome assembly protein 1.